The following is a 489-amino-acid chain: N-succinylglutamate 5-semialdehyde dehydrogenase (489 aa).

223–228 (GSASTG) is a binding site for NAD(+). Active-site residues include E246 and C280.

It belongs to the aldehyde dehydrogenase family. AstD subfamily.

It catalyses the reaction N-succinyl-L-glutamate 5-semialdehyde + NAD(+) + H2O = N-succinyl-L-glutamate + NADH + 2 H(+). It functions in the pathway amino-acid degradation; L-arginine degradation via AST pathway; L-glutamate and succinate from L-arginine: step 4/5. Catalyzes the NAD-dependent reduction of succinylglutamate semialdehyde into succinylglutamate. This chain is N-succinylglutamate 5-semialdehyde dehydrogenase, found in Acinetobacter baylyi (strain ATCC 33305 / BD413 / ADP1).